A 506-amino-acid polypeptide reads, in one-letter code: Maturase K (506 aa).

It belongs to the intron maturase 2 family. MatK subfamily.

The protein resides in the plastid. Its subcellular location is the chloroplast. Functionally, usually encoded in the trnK tRNA gene intron. Probably assists in splicing its own and other chloroplast group II introns. This is Maturase K from Arabis alpina (Alpine rock-cress).